Consider the following 538-residue polypeptide: Retinoblastoma-binding protein 5 (538 aa).

WD repeat units follow at residues 22–63 (DCIS…KIIS) and 64–103 (AHIH…CDQR). Lys129 is covalently cross-linked (Glycyl lysine isopeptide (Lys-Gly) (interchain with G-Cter in SUMO2)). WD repeat units lie at residues 148-188 (DDDS…LVAS), 196-235 (SNTT…TCGR), 249-291 (VNRT…KILH), and 293-331 (TRGE…NWSA). Thr252 carries the post-translational modification Phosphothreonine; by CDK1. Positions 330–366 (SAFAPDFKELDENVEYEERESEFDIEDEDKSEPEQTG) are interaction with ASH2L. A compositionally biased stretch (acidic residues) spans 344–360 (EYEERESEFDIEDEDKS). The interval 344-377 (EYEERESEFDIEDEDKSEPEQTGADAAEDEEVDV) is disordered. Ser350 is subject to Phosphoserine. Residues 371 to 380 (EDEEVDVTSV) form an interaction with WDR5 region. Phosphoserine occurs at positions 388 and 389. A disordered region spans residues 408–519 (VEDPEENPYG…LPLEGSTKGK (112 aa)). Over residues 479-490 (SKKKQAGRPKGS) the composition is skewed to basic residues. The span at 491–510 (KGKEKDSPFKPKLYKGDRGL) shows a compositional bias: basic and acidic residues. Ser497 carries the phosphoserine; by CDK1 modification. A Phosphoserine modification is found at Ser525.

In terms of assembly, component of the SET1 complex, at least composed of the catalytic subunit (SETD1A or SETD1B), WDR5, WDR82, RBBP5, ASH2L/ASH2, CXXC1/CFP1, HCFC1 and DPY30. Core component of several methyltransferase-containing complexes including MLL1/MLL, MLL2/3 (also named ASCOM complex) and MLL4/WBP7. Each complex is at least composed of ASH2L, RBBP5, WDR5, DPY30, one or more specific histone methyltransferases (KMT2A/MLL1, KMT2D/MLL2, KMT2C/MLL3 and KMT2B/MLL4), and the facultative components PAGR1, BACC1, CHD8, E2F6, HCFC1, HCFC2, HSP70, INO80C, KDM6A, KANSL1, LAS1L, MAX, MCRS1, MEN1, MGA, MYST1/MOF, NCOA6, PAXIP1/PTIP, PELP1, PHF20, PRP31, RING2, RUVB1/TIP49A, RUVB2/TIP49B, SENP3, TAF1, TAF4, TAF6, TAF7, TAF9, TEX10 and alpha- and beta-tubulin. Component of a histone methylation complex composed of at least ZNF335, RBBP5, ASH2L and WDR5; the complex may have histone H3-specific methyltransferase activity, however does not have specificity for 'Lys-4' of histone H3. Interacts with ZNF335. Interacts with ASH2L; the interaction is direct. Interacts with WDR5; the interaction is direct. Components of the ZNF335-RBBP5-ASH2L-WDR5 histone methylation complex may associate with components of a nuclear receptor-mediated transcription complex to form a complex at least composed of ZNF335, HCFC1, CCAR2, EMSY, MKI67, RBBP5, ASH2L and WDR5. Within this complex interacts with EMSY. Found in a complex with RBBP5, ASH2L, DPY30, KMT2A, KMT2D and WDR5. Interacts with SETD1A. Interacts with WDR82.

The protein resides in the nucleus. In terms of biological role, in embryonic stem (ES) cells, plays a crucial role in the differentiation potential, particularly along the neural lineage, regulating gene induction and H3 'Lys-4' methylation at key developmental loci, including that mediated by retinoic acid. Does not affect ES cell self-renewal. Component or associated component of some histone methyltransferase complexes which regulates transcription through recruitment of those complexes to gene promoters. As part of the MLL1/MLL complex, involved in mono-, di- and trimethylation at 'Lys-4' of histone H3. Histone H3 'Lys-4' methylation represents a specific tag for epigenetic transcriptional activation. In association with ASH2L and WDR5, stimulates the histone methyltransferase activities of KMT2A, KMT2B, KMT2C, KMT2D, SETD1A and SETD1B. The sequence is that of Retinoblastoma-binding protein 5 (Rbbp5) from Mus musculus (Mouse).